The following is a 626-amino-acid chain: Serine/threonine-protein kinase PknH (626 aa).

The Cytoplasmic segment spans residues 1–403; it reads MSDAQDSRVG…QTPRKTNPWP (403 aa). Positions 16–276 constitute a Protein kinase domain; it reads YHLKRLLGRG…DLALAAHEAL (261 aa). Residues 22–30 and lysine 45 contribute to the ATP site; that span reads LGRGGMGEV. Aspartate 139 (proton acceptor) is an active-site residue. At threonine 170 the chain carries Phosphothreonine. The interval 292 to 396 is disordered; it reads QESTLPAPPK…GGPSPWAQTP (105 aa). 2 stretches are compositionally biased toward pro residues: residues 297-308 and 316-342; these read PAPPKPVPPPTM and RQPP…PAQP. Positions 343–355 are enriched in low complexity; it reads GPAGQRPGPTGQP. A helical transmembrane segment spans residues 404-424; that stretch reads LVAGAAAVVLVLVLGAIGIWI. The Extracellular portion of the chain corresponds to 425–626; that stretch reads AIRPKPVQPP…AKIVDKVNKE (202 aa). 2 cysteine pairs are disulfide-bonded: cysteine 482–cysteine 545 and cysteine 587–cysteine 604.

This sequence belongs to the protein kinase superfamily. Ser/Thr protein kinase family. Requires a divalent metal cation as cofactor. In terms of processing, autophosphorylated on threonine and serine residues. Dephosphorylated by PstP.

It localises to the cell membrane. The enzyme catalyses L-seryl-[protein] + ATP = O-phospho-L-seryl-[protein] + ADP + H(+). It carries out the reaction L-threonyl-[protein] + ATP = O-phospho-L-threonyl-[protein] + ADP + H(+). Inhibited by the kinase inhibitors staurosporine and H-7. In terms of biological role, may regulate bacterial growth in response to external signals to facilitate adaptation to the host environment. In vitro, phosphorylates several substrates such as EmbR, DevR (DosR), DacB1 and Rv0681. In Mycobacterium tuberculosis (strain ATCC 25618 / H37Rv), this protein is Serine/threonine-protein kinase PknH (pknH).